The sequence spans 483 residues: Phloretin 2'-O-glucosyltransferase (483 aa).

The Proton acceptor role is filled by His-15. His-15 is a binding site for an anthocyanidin. The active-site Charge relay is Asp-118. Thr-140, Ala-360, Gln-362, His-377, Trp-380, Asn-381, Ser-382, and Glu-385 together coordinate UDP-alpha-D-glucose. Ala-400 provides a ligand contact to an anthocyanidin. Residues Glu-401 and Gln-402 each coordinate UDP-alpha-D-glucose.

The protein belongs to the UDP-glycosyltransferase family.

It catalyses the reaction phloretin + UDP-alpha-D-glucose = phlorizin + UDP + H(+). Glycosyltransferase that possesses phloretin 2'-O-glycosyltransferase activity. Converts phloretin to phlorizin (phloretin 2'-O-glucoside), a potent antioxidant. Is specific for phloretin and does not possess glycosyltransferase activity toward caffeic acid, catechin, chlorogenic acid, 2-coumaric acid, 3-coumaric acid, 4-coumaric acid, cyanidin, 3,4-dihydroxyhydrocinnamic acid, epicatechin, 3-hydroxybenzoic acid, naringenin, 3,4-dihydroxybenzoic acid, quercetin and rutin. Can glycosylate phloretin in the presence of UDP-glucose, UDP-xylose and UDP-galactose. The polypeptide is Phloretin 2'-O-glucosyltransferase (Malus domestica (Apple)).